The chain runs to 259 residues: Ribosomal RNA small subunit methyltransferase A (259 aa).

S-adenosyl-L-methionine is bound by residues asparagine 13, threonine 15, glycine 40, glutamate 61, aspartate 85, and asparagine 105.

Belongs to the class I-like SAM-binding methyltransferase superfamily. rRNA adenine N(6)-methyltransferase family. RsmA subfamily.

It localises to the cytoplasm. The enzyme catalyses adenosine(1518)/adenosine(1519) in 16S rRNA + 4 S-adenosyl-L-methionine = N(6)-dimethyladenosine(1518)/N(6)-dimethyladenosine(1519) in 16S rRNA + 4 S-adenosyl-L-homocysteine + 4 H(+). Functionally, specifically dimethylates two adjacent adenosines (A1518 and A1519) in the loop of a conserved hairpin near the 3'-end of 16S rRNA in the 30S particle. May play a critical role in biogenesis of 30S subunits. The sequence is that of Ribosomal RNA small subunit methyltransferase A from Mycoplasma genitalium (strain ATCC 33530 / DSM 19775 / NCTC 10195 / G37) (Mycoplasmoides genitalium).